Reading from the N-terminus, the 662-residue chain is DNA ligase (662 aa).

Residues 31–35 (DKDYD) and 79–80 (SL) each bind NAD(+). Lys-121 (N6-AMP-lysine intermediate) is an active-site residue. NAD(+) contacts are provided by Arg-143, Glu-177, and Lys-313. Zn(2+) is bound by residues Cys-406, Cys-409, Cys-422, and Cys-428. In terms of domain architecture, BRCT spans 586-662 (VLESPFMGKT…LSEEEFENMI (77 aa)).

It belongs to the NAD-dependent DNA ligase family. LigA subfamily. Mg(2+) serves as cofactor. The cofactor is Mn(2+).

The catalysed reaction is NAD(+) + (deoxyribonucleotide)n-3'-hydroxyl + 5'-phospho-(deoxyribonucleotide)m = (deoxyribonucleotide)n+m + AMP + beta-nicotinamide D-nucleotide.. Its function is as follows. DNA ligase that catalyzes the formation of phosphodiester linkages between 5'-phosphoryl and 3'-hydroxyl groups in double-stranded DNA using NAD as a coenzyme and as the energy source for the reaction. It is essential for DNA replication and repair of damaged DNA. This Clostridium perfringens (strain SM101 / Type A) protein is DNA ligase.